Consider the following 153-residue polypeptide: Insulin-like growth factor 1 (153 aa).

The tract at residues Gly-49–Thr-77 is b. 3 disulfides stabilise this stretch: Cys-54/Cys-96, Cys-66/Cys-109, and Cys-95/Cys-100. Residues Gly-78–Thr-89 are c. Positions Gly-90–Ala-110 are a. Residues Pro-111–Ala-118 form a d region. A propeptide spans Arg-119 to Met-153 (e peptide). Residues Ser-120 to Met-153 are disordered. The span at Arg-125–Leu-138 shows a compositional bias: basic and acidic residues. Positions Ser-142 to Met-153 are enriched in polar residues.

It belongs to the insulin family. Forms a ternary complex with IGFR1 and ITGAV:ITGB3. Forms a ternary complex with IGFR1 and ITGA6:ITGB4. Forms a ternary complex with IGFBP3 and ALS.

Its subcellular location is the secreted. Functionally, the insulin-like growth factors, isolated from plasma, are structurally and functionally related to insulin but have a much higher growth-promoting activity. May be a physiological regulator of [1-14C]-2-deoxy-D-glucose (2DG) transport and glycogen synthesis in osteoblasts. Stimulates glucose transport in bone-derived osteoblastic (PyMS) cells and is effective at much lower concentrations than insulin, not only regarding glycogen and DNA synthesis but also with regard to enhancing glucose uptake. May play a role in synapse maturation. Ca(2+)-dependent exocytosis of IGF1 is required for sensory perception of smell in the olfactory bulb. Acts as a ligand for IGF1R. Binds to the alpha subunit of IGF1R, leading to the activation of the intrinsic tyrosine kinase activity which autophosphorylates tyrosine residues in the beta subunit thus initiating a cascade of down-stream signaling events leading to activation of the PI3K-AKT/PKB and the Ras-MAPK pathways. Binds to integrins ITGAV:ITGB3 and ITGA6:ITGB4. Its binding to integrins and subsequent ternary complex formation with integrins and IGFR1 are essential for IGF1 signaling. Induces the phosphorylation and activation of IGFR1, MAPK3/ERK1, MAPK1/ERK2 and AKT1. As part of the MAPK/ERK signaling pathway, acts as a negative regulator of apoptosis in cardiomyocytes via promotion of STUB1/CHIP-mediated ubiquitination and degradation of ICER-type isoforms of CREM. The chain is Insulin-like growth factor 1 from Rhinopithecus roxellana (Golden snub-nosed monkey).